The sequence spans 638 residues: Nitrous-oxide reductase (638 aa).

A signal peptide (tat-type signal) is located at residues 1 to 52; the sequence is MSDKDSKNTPQVPEKLGLSRRGFLGASAVTGAAVAATALGGAVMTRESWAQA. Cu cation is bound by residues His129, His130, and His178. Positions 256, 259, 267, 273, and 324 each coordinate Ca(2+). Residues His326, His382, and His433 each contribute to the Cu cation site. 2 residues coordinate Ca(2+): Lys454 and Glu469. The Cu cation site is built by His494, His583, Cys618, Trp620, Cys622, His626, and Met629. The interval 542 to 638 is COX2-like; that stretch reads NKVRVYMTSM…MVGRMMVEPA (97 aa).

Belongs to the NosZ family. This sequence in the C-terminal section; belongs to the cytochrome c oxidase subunit 2 family. Homodimer. Requires Ca(2+) as cofactor. The cofactor is Cu cation. In terms of processing, predicted to be exported by the Tat system. The position of the signal peptide cleavage has not been experimentally proven. Post-translationally, the N-terminus is blocked.

Its subcellular location is the periplasm. The catalysed reaction is N2 + 2 Fe(III)-[cytochrome c] + H2O = nitrous oxide + 2 Fe(II)-[cytochrome c] + 2 H(+). It participates in nitrogen metabolism; nitrate reduction (denitrification); dinitrogen from nitrate: step 4/4. Functionally, nitrous-oxide reductase is part of a bacterial respiratory system which is activated under anaerobic conditions in the presence of nitrate or nitrous oxide. The chain is Nitrous-oxide reductase (nosZ) from Stutzerimonas stutzeri (Pseudomonas stutzeri).